Reading from the N-terminus, the 462-residue chain is L-seryl-tRNA(Sec) selenium transferase (462 aa).

K294 is subject to N6-(pyridoxal phosphate)lysine.

It belongs to the SelA family. In terms of assembly, homodecamer; pentamer of dimers. Binds only one seryl-tRNA(Sec) per dimer. The cofactor is pyridoxal 5'-phosphate.

Its subcellular location is the cytoplasm. It carries out the reaction L-seryl-tRNA(Sec) + selenophosphate + H(+) = L-selenocysteinyl-tRNA(Sec) + phosphate. The protein operates within aminoacyl-tRNA biosynthesis; selenocysteinyl-tRNA(Sec) biosynthesis; selenocysteinyl-tRNA(Sec) from L-seryl-tRNA(Sec) (bacterial route): step 1/1. Converts seryl-tRNA(Sec) to selenocysteinyl-tRNA(Sec) required for selenoprotein biosynthesis. The chain is L-seryl-tRNA(Sec) selenium transferase from Yersinia pestis bv. Antiqua (strain Antiqua).